We begin with the raw amino-acid sequence, 66 residues long: Type 3 secretion system chaperone YscE (66 aa).

Belongs to the YscE family. As to quaternary structure, component of the heterodimeric YscE-YscG chaperone. The YscE-YscG chaperone forms a stable ternary complex with YscF/SctF.

It localises to the cytoplasm. In terms of biological role, chaperone of the type III secretion system (T3SS), also called injectisome, which is used to inject bacterial effector proteins into eukaryotic host cells. Along with YscG, prevents premature polymerization of the YscF/SctF needle protein within the cytoplasm. Required for Yop secretion. The sequence is that of Type 3 secretion system chaperone YscE from Yersinia enterocolitica.